The following is a 224-amino-acid chain: MMMNGQKLAPAAEVAVQLPESKVAADNISGTMSGPLVGASGGGTTAAMRPFGRKAEVMHVLLRLLCIITSVAALSFMFTAQQSSTISIYGFMLPVQSKWSFSHSFEYLVGVSAAVAAHSLLQLLISMSRLLRKSPVIPSRSHAWLIFAGDQVFAYAMISAGAAASGVTNLNRTGIQHTALPNFCKPLQSFCDHVAVSIFFTFTSCFLLAASAVQEVIWLSRSKY.

Topologically, residues 1–59 are cytoplasmic; the sequence is MMMNGQKLAPAAEVAVQLPESKVAADNISGTMSGPLVGASGGGTTAAMRPFGRKAEVMH. A helical transmembrane segment spans residues 60–80; the sequence is VLLRLLCIITSVAALSFMFTA. The Extracellular segment spans residues 81–106; the sequence is QQSSTISIYGFMLPVQSKWSFSHSFE. Residues 107–127 traverse the membrane as a helical segment; that stretch reads YLVGVSAAVAAHSLLQLLISM. At 128-142 the chain is on the cytoplasmic side; that stretch reads SRLLRKSPVIPSRSH. Residues 143–163 form a helical membrane-spanning segment; it reads AWLIFAGDQVFAYAMISAGAA. Residues 164-192 are Extracellular-facing; sequence ASGVTNLNRTGIQHTALPNFCKPLQSFCD. Residue Asn-171 is glycosylated (N-linked (GlcNAc...) asparagine). A helical membrane pass occupies residues 193-213; sequence HVAVSIFFTFTSCFLLAASAV. Residues 214–224 are Cytoplasmic-facing; it reads QEVIWLSRSKY.

It belongs to the Casparian strip membrane proteins (CASP) family. In terms of assembly, homodimer and heterodimers.

It is found in the cell membrane. The polypeptide is CASP-like protein 3A1 (Populus trichocarpa (Western balsam poplar)).